Reading from the N-terminus, the 203-residue chain is Casparian strip membrane protein 1 (203 aa).

An N-acetylalanine modification is found at Ala-2. Residues 2–40 (AKESTTIDVGEPSTVTKSSSHVVKKKGFVAAAAGGGAKR) are Cytoplasmic-facing. Residues 41-61 (GLAIFDFLLRLAAIGVTIGAA) traverse the membrane as a helical segment. Residues 62–92 (SVMYTAQETLPFFTQFLQFQAGYDDLPAFQY) are Extracellular-facing. A helical membrane pass occupies residues 93–113 (FVIAVAIVASYLVLSLPFSIV). The Cytoplasmic portion of the chain corresponds to 114-124 (TIVRPLAVAPR). A helical transmembrane segment spans residues 125–145 (LILLIFDTLVVTLNTSAAAAA). Residues 146-177 (ASIVYLAHNGNQSTNWLPICQQFGDFCQNVST) are Extracellular-facing. Residues Asn-156 and Asn-174 are each glycosylated (N-linked (GlcNAc...) asparagine). A helical membrane pass occupies residues 178–198 (AVVAASIAILFFIVLIIISAI). Topologically, residues 199-203 (ALKRH) are cytoplasmic.

Belongs to the Casparian strip membrane proteins (CASP) family. In terms of assembly, homodimer and heterodimers.

Its subcellular location is the cell membrane. Its function is as follows. Regulates membrane-cell wall junctions and localized cell wall deposition. Required for establishment of the Casparian strip membrane domain (CSD) and the subsequent formation of Casparian strips, a cell wall modification of the root endodermis that determines an apoplastic barrier between the intraorganismal apoplasm and the extraorganismal apoplasm and prevents lateral diffusion. This is Casparian strip membrane protein 1 from Arabidopsis lyrata subsp. lyrata (Lyre-leaved rock-cress).